Here is a 407-residue protein sequence, read N- to C-terminus: Peptidase T (407 aa).

Residue histidine 82 coordinates Zn(2+). Residue aspartate 84 is part of the active site. Position 143 (aspartate 143) interacts with Zn(2+). The active-site Proton acceptor is the glutamate 177. Glutamate 178, aspartate 200, and histidine 382 together coordinate Zn(2+).

Belongs to the peptidase M20B family. Requires Zn(2+) as cofactor.

The protein localises to the cytoplasm. The catalysed reaction is Release of the N-terminal residue from a tripeptide.. Its function is as follows. Cleaves the N-terminal amino acid of tripeptides. This chain is Peptidase T, found in Streptococcus pyogenes serotype M12 (strain MGAS2096).